The chain runs to 562 residues: Tissue-type plasminogen activator (562 aa).

Residues 1-20 (MNAMKRGLCCVLLLCGAVFA) form the signal peptide. Positions 21 to 32 (LPSQEIHARVRR) are excised as a propeptide. A propeptide spans 33 to 35 (GAR) (removed by plasmin). One can recognise a Fibronectin type-I domain in the interval 39–81 (VICRDEKTQMIYQQHQSWLRPVLRSNRVEYCWCNSGRAQCHSV). 17 disulfide bridges follow: Cys41–Cys71, Cys69–Cys78, Cys86–Cys97, Cys91–Cys108, Cys110–Cys119, Cys127–Cys208, Cys148–Cys190, Cys179–Cys203, Cys215–Cys296, Cys236–Cys278, Cys267–Cys291, Cys299–Cys430, Cys342–Cys358, Cys350–Cys419, Cys444–Cys519, Cys476–Cys492, and Cys509–Cys537. An important for binding to annexin A2 region spans residues 42 to 52 (RDEKTQMIYQQ). The 39-residue stretch at 82–120 (PVRSCSEPRCFNGGTCQQALYFSDFVCQCPEGFAGKCCE) folds into the EGF-like domain. A glycan (O-linked (Fuc) threonine) is linked at Thr96. 2 Kringle domains span residues 126 to 208 (TCYE…TPAC) and 214 to 296 (DCYF…VPSC). Asn152 carries an N-linked (GlcNAc...) asparagine glycan. Positions 311 to 561 (IKGGLFADIA…YLDWIHDNMR (251 aa)) constitute a Peptidase S1 domain. Residues His357 and Asp406 each act as charge relay system in the active site. N-linked (GlcNAc...) asparagine glycosylation is present at Asn483. Catalysis depends on Ser513, which acts as the Charge relay system.

The protein belongs to the peptidase S1 family. As to quaternary structure, heterodimer of chain A and chain B held by a disulfide bond. Binds to fibrin with high affinity. This interaction leads to an increase in the catalytic efficiency of the enzyme due to an increase in affinity for plasminogen. Similarly, binding to heparin increases the activation of plasminogen. Binds to annexin A2, cytokeratin-8, fibronectin and laminin. Binds to mannose receptor and the low-density lipoprotein receptor-related protein (LRP1); these proteins are involved in TPA clearance. Binds LRP1B; binding is followed by internalization and degradation. Forms heterodimer with SERPINA5. Interacts with SERPINE1. In complex with SERPINE1, interacts with SORL1. The single chain, almost fully active enzyme, can be further processed into a two-chain fully active form by a cleavage after Arg-310 catalyzed by plasmin, tissue kallikrein or factor Xa.

It is found in the secreted. It localises to the extracellular space. The enzyme catalyses Specific cleavage of Arg-|-Val bond in plasminogen to form plasmin.. Inhibited by SERPINA5. Inhibited by SERPINE1. Its function is as follows. Converts the abundant, but inactive, zymogen plasminogen to plasmin by hydrolyzing a single Arg-Val bond in plasminogen. By controlling plasmin-mediated proteolysis, it plays an important role in tissue remodeling and degradation, in cell migration and many other physiopathological events. During oocyte activation, plays a role in cortical granule reaction in the zona reaction, which contributes to the block to polyspermy. This is Tissue-type plasminogen activator (PLAT) from Pongo abelii (Sumatran orangutan).